Reading from the N-terminus, the 256-residue chain is 5-keto-4-deoxy-D-glucarate aldolase (256 aa).

The active-site Proton acceptor is histidine 50. A substrate-binding site is contributed by glutamine 151. Glutamate 153 is a binding site for Mg(2+). Residues serine 178 and aspartate 179 each coordinate substrate. Aspartate 179 is a Mg(2+) binding site.

The protein belongs to the HpcH/HpaI aldolase family. KDGluc aldolase subfamily. As to quaternary structure, homohexamer; trimer of dimers. It depends on Mg(2+) as a cofactor.

It carries out the reaction 5-dehydro-4-deoxy-D-glucarate = 2-hydroxy-3-oxopropanoate + pyruvate. The enzyme catalyses 2-dehydro-3-deoxy-D-glucarate = 2-hydroxy-3-oxopropanoate + pyruvate. Its pathway is carbohydrate acid metabolism; galactarate degradation; D-glycerate from galactarate: step 2/3. Catalyzes the reversible retro-aldol cleavage of both 5-keto-4-deoxy-D-glucarate and 2-keto-3-deoxy-D-glucarate to pyruvate and tartronic semialdehyde. This chain is 5-keto-4-deoxy-D-glucarate aldolase, found in Salmonella paratyphi A (strain ATCC 9150 / SARB42).